Consider the following 670-residue polypeptide: MESIIQQINQLRTSLRHHEHQYHVLDAPEIPDAEYDRMMQQLRDLEAQHPELVTNDSPTQRVGAAPLDAFEQVEHEVPMLSLDNVFDEESYLAFDKRVHDRLKTAEPLTFCCELKLDGLAVSLLYENGELVRAATRGDGTTGENITANVRTIRAIPLRLHGDNVPRRVEVRGEVFMPQAGFEQLNEEARRKGGKVFANPRNAAAGSLRQLDPRITAKRPLTFFCYGVGLLDGGELPRSHIQCLMQFKAWGLPVSERVKLCTGSDQVIAFYRQIEQDRAGLGFDIDGVVIKVDDLVLQEQLGFVARAPRWATAFKFPAQEQITQVREVEFQVGRTGAITPVARLEPVQVAGVIVSNATLHNADEIERLGLRIGDTVIVRRAGDVIPQVVGVVMEQRPDDTKEITFPSQCPVCGSDIERVEGEAVARCTGGLFCAAQRKEALKHFVSRRALDVDGMGDKIIEQLVEKQYVENPADLFQLTAGKLTGLDRMGPKSAQNLIAALEKAKQTTFARFLYALGIREVGEATAANLAAHFRTLDNLRAADIETLKSVPDVGEVVAKHVMNFLSEEHNQKVIEELEKVVSWPEPQQIVVEEIDSPFAGKTVVLTGSLTILSRDEAKDRLTALGAKVSGSVSKKTHLVIAGEAAGSKLAKAQELGIKVIDEAEMIRLLGE.

Residues 32-36, 81-82, and Glu-113 each bind NAD(+); these read DAEYD and SL. The active-site N6-AMP-lysine intermediate is Lys-115. Residues Arg-136, Glu-173, Lys-290, and Lys-314 each coordinate NAD(+). 4 residues coordinate Zn(2+): Cys-408, Cys-411, Cys-426, and Cys-432. The BRCT domain occupies 592-670; sequence EIDSPFAGKT…EAEMIRLLGE (79 aa).

The protein belongs to the NAD-dependent DNA ligase family. LigA subfamily. It depends on Mg(2+) as a cofactor. Requires Mn(2+) as cofactor.

The enzyme catalyses NAD(+) + (deoxyribonucleotide)n-3'-hydroxyl + 5'-phospho-(deoxyribonucleotide)m = (deoxyribonucleotide)n+m + AMP + beta-nicotinamide D-nucleotide.. Its function is as follows. DNA ligase that catalyzes the formation of phosphodiester linkages between 5'-phosphoryl and 3'-hydroxyl groups in double-stranded DNA using NAD as a coenzyme and as the energy source for the reaction. It is essential for DNA replication and repair of damaged DNA. In Yersinia pseudotuberculosis serotype O:1b (strain IP 31758), this protein is DNA ligase.